The following is a 682-amino-acid chain: Protein asunder (682 aa).

A coiled-coil region spans residues 517-570 (NGARLKLSKAKDQYRLLYRELEQLIHLNATTVHHKNLLESLQSLRAAYGEAKSE). A compositionally biased stretch (polar residues) spans 571 to 583 (PNSSLLRSYTESP). The interval 571 to 612 (PNSSLLRSYTESPHSPERLEPIPSGGSSGSNSNSLLKASKRR) is disordered. Positions 606–612 (LKASKRR) match the Nuclear localization signal (NLS) motif.

The protein belongs to the Integrator subunit 13 family. As to quaternary structure, belongs to the multiprotein complex Integrator, at least composed of IntS1, IntS2, IntS3, IntS4, omd/IntS5, IntS6, defl/IntS7, IntS8, IntS9, IntS10, IntS11, IntS12, asun/IntS13, IntS14 and IntS15. The core complex associates with protein phosphatase 2A subunits mts/PP2A and Pp2A-29B, to form the Integrator-PP2A (INTAC) complex. Post-translationally, phosphorylated.

The protein localises to the nucleus. Its subcellular location is the cytoplasm. It localises to the perinuclear region. Component of the integrator complex, a multiprotein complex that terminates RNA polymerase II (Pol II) transcription in the promoter-proximal region of genes. The integrator complex provides a quality checkpoint during transcription elongation by driving premature transcription termination of transcripts that are unfavorably configured for transcriptional elongation: the complex terminates transcription by (1) catalyzing dephosphorylation of the C-terminal domain (CTD) of Pol II subunit Polr2A/Rbp1 and Spt5, and (2) degrading the exiting nascent RNA transcript via endonuclease activity. The integrator complex is also involved in the 3'-end processing of the U7 snRNA, and also the spliceosomal snRNAs U1, U2, U4 and U5. In Drosophila ananassae (Fruit fly), this protein is Protein asunder (asun).